The following is a 295-amino-acid chain: 4-diphosphocytidyl-2-C-methyl-D-erythritol kinase (295 aa).

Residue lysine 15 is part of the active site. 101–111 (PIAAGLGGGSS) contributes to the ATP binding site. Aspartate 143 is an active-site residue.

This sequence belongs to the GHMP kinase family. IspE subfamily.

It catalyses the reaction 4-CDP-2-C-methyl-D-erythritol + ATP = 4-CDP-2-C-methyl-D-erythritol 2-phosphate + ADP + H(+). Its pathway is isoprenoid biosynthesis; isopentenyl diphosphate biosynthesis via DXP pathway; isopentenyl diphosphate from 1-deoxy-D-xylulose 5-phosphate: step 3/6. Functionally, catalyzes the phosphorylation of the position 2 hydroxy group of 4-diphosphocytidyl-2C-methyl-D-erythritol. This is 4-diphosphocytidyl-2-C-methyl-D-erythritol kinase from Caulobacter vibrioides (strain ATCC 19089 / CIP 103742 / CB 15) (Caulobacter crescentus).